Consider the following 886-residue polypeptide: Putative respiratory burst oxidase homolog protein H (886 aa).

Disordered stretches follow at residues 1-46 (MKSN…KKNA) and 64-103 (WRKS…TTSS). Topologically, residues 1 to 316 (MKSNTPTEDS…AELMHENWKK (316 aa)) are cytoplasmic. Residues 64–78 (WRKSGNLGSPSTRKS) show a composition bias toward polar residues. 2 EF-hand-like regions span residues 137–145 (SVDGKLPKE) and 171–183 (RQIE…DKEQ). EF-hand domains are found at residues 195-230 (DLDC…SASA) and 239-274 (NAAA…MVTN). Ca(2+)-binding residues include aspartate 208, asparagine 210, aspartate 212, lysine 214, and glutamate 219. Phosphoserine is present on serine 283. Residues 317–337 (LWVLALWAIINVYLFMWKYEE) traverse the membrane as a helical segment. Over 338-404 (FMRNPLYNIT…INFHKVIAYM (67 aa)) the chain is Extracellular. A Ferric oxidoreductase domain is found at 355–512 (KGAAETLKLN…LLVLAYILLI (158 aa)). A helical transmembrane segment spans residues 405–421 (IAFQALLHTALHIFCNY). The Cytoplasmic segment spans residues 422-456 (PRLSSCSYDVFLTYAGAALGNTQPSYLGLMLTSVS). Residues 457–477 (ITGVLMIFFMGFSFTLAMHYF) form a helical membrane-spanning segment. Over 478-499 (RRNIVKLPKPFNVLAGFNAFWY) the chain is Extracellular. Residues 500–520 (AHHLLVLAYILLIIHGYYLII) traverse the membrane as a helical segment. Residues 521 to 528 (EKPWYQKT) lie on the Cytoplasmic side of the membrane. Residues 529 to 546 (TWMYLAVPMLFYASERLF) traverse the membrane as a helical segment. The Extracellular portion of the chain corresponds to 547-688 (SRLLQEHSHR…PYGAPAQNYQ (142 aa)). The FAD-binding FR-type domain occupies 552–686 (EHSHRVNVIK…KGPYGAPAQN (135 aa)). The helical transmembrane segment at 689 to 709 (KFDILLLVGLGIGATPFISIL) threads the bilayer. At 710-886 (KDMLNHLKPG…TRFTFHKENF (177 aa)) the chain is on the cytoplasmic side.

Belongs to the RBOH (TC 5.B.1.3) family. Monomer and homodimer.

The protein localises to the membrane. Functionally, calcium-dependent NADPH oxidase that generates superoxide. The sequence is that of Putative respiratory burst oxidase homolog protein H (RBOHH) from Arabidopsis thaliana (Mouse-ear cress).